We begin with the raw amino-acid sequence, 859 residues long: Photoactivated adenylate cyclase subunit beta (859 aa).

Residues Leu56–Lys149 form the BLUF 1 domain. Residues Val205 to Ala333 form the Guanylate cyclase 1 domain. Residues Arg420–Gln443 form a disordered region. Residues Leu471–Thr563 form the BLUF 2 domain. One can recognise a Guanylate cyclase 2 domain in the interval Val619–Glu748. The tract at residues Ala813–Arg859 is disordered. Over residues Arg815–Phe831 the composition is skewed to basic and acidic residues. The segment covering Arg846–Arg859 has biased composition (polar residues).

Belongs to the adenylyl cyclase class-4/guanylyl cyclase family. As to quaternary structure, heterotetramer of two alpha and two beta subunits. Requires FAD as cofactor.

It localises to the cell projection. Its subcellular location is the cilium. The protein resides in the flagellum. It catalyses the reaction ATP = 3',5'-cyclic AMP + diphosphate. Activity increased by up to 80-fold under blue light. Acts as a blue light photoreceptor for the step-up photophobic response. Mediates photoavoidance. In Euglena gracilis, this protein is Photoactivated adenylate cyclase subunit beta.